A 245-amino-acid chain; its full sequence is Polyhedrin (245 aa).

It belongs to the polyhedrin family.

Its function is as follows. Major component of the virus occlusion bodies, which are large proteinaceous structures (polyhedra), that protect the virus from the outside environment for extended periods until they are ingested by insect larvae. The sequence is that of Polyhedrin (PH) from Hyphantria cunea nuclear polyhedrosis virus (HcNPV).